The sequence spans 451 residues: Signal transduction histidine-protein kinase ArlS (451 aa).

A run of 2 helical transmembrane segments spans residues 11–31 and 156–176; these read IIVT…IIIF and IIAL…SYVF. One can recognise an HAMP domain in the interval 178–231; it reads TQITKPLVSLSNKMIEIRRDGFQNKLQLNTNYEEIDNLANTFNEMMSQIEESFN. In terms of domain architecture, Histidine kinase spans 239–451; sequence DASHELRTPL…NKGTTFKIIF (213 aa). Histidine 242 bears the Phosphohistidine; by autocatalysis mark.

Post-translationally, autophosphorylated.

The protein localises to the cell membrane. The catalysed reaction is ATP + protein L-histidine = ADP + protein N-phospho-L-histidine.. Functionally, member of the two-component regulatory system ArlS/ArlR involved in the regulation of adhesion, autolysis, multidrug resistance and virulence. ArlS probably functions as a sensor protein kinase which is autophosphorylated at a histidine residue and transfers its phosphate group to ArlR. The protein is Signal transduction histidine-protein kinase ArlS (arlS) of Staphylococcus aureus (strain bovine RF122 / ET3-1).